The primary structure comprises 520 residues: 1,4-alpha-glucan branching enzyme TTHA1902 (520 aa).

Glu-184 (nucleophile) is an active-site residue. Residues Arg-265 and Gly-282 each coordinate substrate. Asp-353 (proton donor) is an active-site residue. Substrate is bound by residues Trp-404, Asp-460, and Gln-469.

The protein belongs to the glycosyl hydrolase 57 family.

The enzyme catalyses Transfers a segment of a (1-&gt;4)-alpha-D-glucan chain to a primary hydroxy group in a similar glucan chain.. It functions in the pathway glycan biosynthesis; glycogen biosynthesis. Catalyzes the formation of branch points in alpha-glucans by cleavage of an alpha-1,4 glycosidic bond and subsequent transfer of the cleaved-off oligosaccharide to a new alpha-1,6 position. The branch chain-length distribution of the reaction products shows degree of polymerization (DP) of 3 to 13, with two local maxima at DP 7 and DP 11. Exhibits an alpha-retaining catalytic mechanism. Is involved in glycogen biosynthesis. Shows a secondary activity, i.e. the hydrolysis of the substrate, being 4% of the total activity. Can use amylose as substrate but not alpha-1,4-linked oligosaccharides of 2-7 glucose residues, beta-cyclodextrin, 6-O-glucosyl-beta-cyclodextrin and 6-O-maltosyl-beta-cyclodextrin. Is not able to branch amylopectin further, it only hydrolyzes amylopectin. Thus, displays preference for linear and long substrates (amylose) over branched structures (amylopectin). This chain is 1,4-alpha-glucan branching enzyme TTHA1902, found in Thermus thermophilus (strain ATCC 27634 / DSM 579 / HB8).